The chain runs to 155 residues: Mitochondrial import protein 1 (155 aa).

This sequence belongs to the MIM1 family.

It localises to the mitochondrion outer membrane. Its function is as follows. Required for the assembly of the TOM (translocase of outer membrane) receptor complex, which is responsible for the recognition and translocation of cytosolically synthesized mitochondrial preproteins. The sequence is that of Mitochondrial import protein 1 from Eremothecium gossypii (strain ATCC 10895 / CBS 109.51 / FGSC 9923 / NRRL Y-1056) (Yeast).